The sequence spans 670 residues: MILEERPDGAGAGEESPRLQGCDSLTQIQCGQLQSRRAQIHQQIDKELQMRTGAENLYRATSNNRVRETVALELSYVNSNLQLLKEELEELSGGVDPGRHGSEAVTVPMIPLGLKETKELDWSTPLKELISVHFGEDGASYEAEIRELEALRQAMRTPSRNESGLELLTAYYNQLCFLDARFLTPARSLGLFFHWYDSLTGVPAQQRALAFEKGSVLFNIGALHTQIGARQDRSCTEGARRAMEAFQRAAGAFSLLRENFSHAPSPDMSAASLCALEQLMMAQAQECVFEGLSPPASMAPQDCLAQLRLAQEAAQVAAEYRLVHRTMAQPPVHDYVPVSWTALVHVKAEYFRSLAHYHVAMALCDGSPATEGELPTHEQVFLQPPTSSKPRGPVLPQELEERRQLGKAHLKRAILGQEEALRLHALCRVLREVDLLRAVISQTLQRSLAKYAELDREDDFCEAAEAPDIQPKTHQKPEARMPRLSQGKGPDIFHRLGPLSVFSAKNRWRLVGPVHLTRGEGGFGLTLRGDSPVLIAAVIPGSQAAAAGLKEGDYIVSVNGQPCRWWRHAEVVTELKAAGEAGASLQVVSLLPSSRLPSLGDRRPVLLGPRGLLRSQREHGCKTPASTWASPRPLLNWSRKAQQGKTGGCPQPCAPVKPAPPSSLKHPGWP.

The segment at 1–20 (MILEERPDGAGAGEESPRLQ) is disordered. The REM-1 domain occupies 23–97 (DSLTQIQCGQ…LEELSGGVDP (75 aa)). Residue Ser24 is modified to Phosphoserine. The BRO1 domain occupies 108 to 457 (PMIPLGLKET…LAKYAELDRE (350 aa)). The PDZ domain maps to 513 to 592 (PVHLTRGEGG…ASLQVVSLLP (80 aa)). The segment at 616 to 670 (QREHGCKTPASTWASPRPLLNWSRKAQQGKTGGCPQPCAPVKPAPPSSLKHPGWP) is disordered. Residues 652 to 661 (PCAPVKPAPP) are compositionally biased toward pro residues.

Belongs to the RHPN family. In terms of assembly, binds specifically to GTP-Rho. Interacts with ROPN1.

Has no enzymatic activity. May serve as a target for Rho, and interact with some cytoskeletal component upon Rho binding or relay a Rho signal to other molecules. This chain is Rhophilin-1, found in Homo sapiens (Human).